A 699-amino-acid chain; its full sequence is Elongation factor G (699 aa).

One can recognise a tr-type G domain in the interval 8 to 288 (EDYRNFGIMA…AVVDYLPSPL (281 aa)). GTP-binding positions include 17 to 24 (AHIDAGKT), 86 to 90 (DTPGH), and 140 to 143 (NKMD).

This sequence belongs to the TRAFAC class translation factor GTPase superfamily. Classic translation factor GTPase family. EF-G/EF-2 subfamily.

It is found in the cytoplasm. Functionally, catalyzes the GTP-dependent ribosomal translocation step during translation elongation. During this step, the ribosome changes from the pre-translocational (PRE) to the post-translocational (POST) state as the newly formed A-site-bound peptidyl-tRNA and P-site-bound deacylated tRNA move to the P and E sites, respectively. Catalyzes the coordinated movement of the two tRNA molecules, the mRNA and conformational changes in the ribosome. The polypeptide is Elongation factor G (Agrobacterium fabrum (strain C58 / ATCC 33970) (Agrobacterium tumefaciens (strain C58))).